The chain runs to 1685 residues: Myomesin-1 (1685 aa).

Positions 33 to 80 (KKRSAVYTQGSTAYSSRSSAAHRRESEAFRRASASSSQQQASQHALSS) are disordered. Low complexity-rich tracts occupy residues 41-51 (QGSTAYSSRSS) and 63-80 (RASA…ALSS). S113 carries the phosphoserine modification. The tract at residues 177–244 (GITTSKQSTA…TSEKKSRKVV (68 aa)) is disordered. The span at 179–220 (TTSKQSTASKQTTASKQSTASKQSTASKQSTASRQSTASRQS) shows a compositional bias: low complexity. Tandem repeats lie at residues 182–187 (KQSTAS), 188–193 (KQTTAS), 194–199 (KQSTAS), 200–205 (KQSTAS), 206–211 (KQSTAS), and 212–217 (RQSTAS). The 6 X 6 AA tandem repeats stretch occupies residues 182 to 217 (KQSTASKQTTASKQSTASKQSTASKQSTASRQSTAS). Residues 221–233 (VVSKQATSALQQE) show a composition bias toward polar residues. 2 Ig-like C2-type domains span residues 277 to 368 (PEFI…ASVV) and 396 to 498 (PYGY…AYVF). Fibronectin type-III domains are found at residues 512-607 (APLD…ALDP), 640-734 (PPTD…VVGD), and 741-834 (APGK…VKAA). A disordered region spans residues 840–938 (SPDVCPALSD…TDRAPPSPPC (99 aa)). Positions 874-888 (LLGSKPNKPSLPSSS) are enriched in low complexity. Phosphoserine is present on residues S883 and S887. The span at 889–902 (QNLGQTEVSKVSET) shows a compositional bias: polar residues. Over residues 920–931 (SKSDPLKKKTDR) the composition is skewed to basic and acidic residues. 2 consecutive Fibronectin type-III domains span residues 933–1034 (PPSP…CEEW) and 1041–1140 (PPHS…TRPG). Phosphoserine is present on S1054. Ig-like C2-type domains lie at 1132–1230 (PVVA…EELK), 1358–1444 (PHFV…LKLV), and 1573–1662 (RVLG…FTVS). Cysteines 1160 and 1210 form a disulfide.

In terms of assembly, homodimer. Interacts with TTN/titin. Interacts with PNKD.

It is found in the cytoplasm. Its subcellular location is the myofibril. The protein resides in the sarcomere. The protein localises to the m line. Major component of the vertebrate myofibrillar M band. Binds myosin, titin, and light meromyosin. This binding is dose dependent. In Homo sapiens (Human), this protein is Myomesin-1 (MYOM1).